Reading from the N-terminus, the 495-residue chain is Carbohydrate oxidase (495 aa).

The signal sequence occupies residues 1 to 22; it reads MRSAFILALGLITASADALVTR. Positions 55 to 229 constitute an FAD-binding PCMH-type domain; it reads LPYIPTAIAQ…AVWKLATFPA (175 aa). The segment at residues 92 to 154 is a cross-link (6-(S-cysteinyl)-8alpha-(pros-histidyl)-FAD (His-Cys)); the sequence is HSYASFGFGG…YGRAISHGTC (63 aa). 2 N-linked (GlcNAc...) asparagine glycosylation sites follow: N244 and N417.

This sequence belongs to the oxygen-dependent FAD-linked oxidoreductase family. The cofactor is FAD. Post-translationally, the FAD cofactor is bound via a bicovalent 6-S-cysteinyl, 8alpha-N1-histidyl FAD linkage.

It is found in the secreted. It carries out the reaction beta-D-glucose + O2 = D-glucono-1,5-lactone + H2O2. The catalysed reaction is D-galactose + O2 = D-galactono-1,5-lactone + H2O2. The enzyme catalyses D-cellobiose + O2 = D-cellobiono-1,5-lactone + H2O2. It catalyses the reaction beta-lactose + O2 = lactobiono-1,5-lactone + H2O2. It carries out the reaction D-maltose + O2 = D-maltobiono-1,5-lactone + H2O2. The catalysed reaction is D-xylose + O2 = D-xylono-1,5-lactone + H2O2. In terms of biological role, catalyzes the selective oxidation of C1 hydroxyl moieties on mono-, oligo- and polysaccharides with concomitant reduction of molecular oxygen to hydrogen peroxide. This results in the formation of the corresponding lactones, which typically undergo spontaneous hydrolysis. Carbohydrate oxidase is able to oxidize a variety of substrates including D-glucose, D-galactose, D-xylose, D-maltose, D-cellobiose, and lactose. In addition, among various oligosaccharides, the enzyme preferred tetrameric dextrins, indicating a favorable interaction of four linked glucose units with the substrate binding pocket. The chain is Carbohydrate oxidase from Microdochium nivale (Pink snow mold).